A 242-amino-acid chain; its full sequence is Sugar fermentation stimulation protein homolog (242 aa).

It belongs to the SfsA family.

In Methanosphaera stadtmanae (strain ATCC 43021 / DSM 3091 / JCM 11832 / MCB-3), this protein is Sugar fermentation stimulation protein homolog.